Reading from the N-terminus, the 84-residue chain is CLAVATA3/ESR (CLE)-related protein 13 (84 aa).

The signal sequence occupies residues 1–29; sequence MGRYTTDQVQVYVLVIVLCTFFSTLQARS. The interval 57–84 is disordered; it reads KQVRDISGDRLSPAGPDPQHNGRSPPRK. 2 positions are modified to hydroxyproline: Pro69 and Pro72. O-linked (Ara...) hydroxyproline glycosylation occurs at Pro72.

It belongs to the CLV3/ESR signal peptide family. In terms of processing, the O-glycosylation (arabinosylation) of the hydroxyproline Pro-72 enhances binding affinity of the CLE13p peptide for its receptor. In terms of tissue distribution, expressed in young nodules throughout the central tissue. Expressed in the apical region of elongated nodules, corresponding to the meristematic and early infection zones.

Its subcellular location is the secreted. It is found in the extracellular space. Its function is as follows. Signaling peptide involved in the regulation of nodulation. Moves from root to shoot to function with the receptor kinase SUNN, in a signaling pathway that plays roles during cellular differentiation, both at the onset of nodulation, and later during nodule meristem development and subsequent homeostasis. Interacts with SUNN signaling to control nodule numbers. SUNN is involved in the autoregulation of nodulation (AON), a long distance systemic signaling from root to shoot and back again, which allows legumes to limit the number of root nodules formed based on available nitrogen and previous rhizobial colonization. In Medicago truncatula (Barrel medic), this protein is CLAVATA3/ESR (CLE)-related protein 13.